The following is a 2281-amino-acid chain: Retinal-specific phospholipid-transporting ATPase ABCA4 (2281 aa).

At 1 to 24 the chain is on the cytoplasmic side; it reads MGFARQIKLLLWKNWTLRKRQKIR. A helical transmembrane segment spans residues 25 to 45; the sequence is FVVELVWPLSLFLVLIWLRNV. Topologically, residues 46–646 are extracellular; the sequence is NPLYSKHECH…MPYPCFVDDS (601 aa). 2 cysteine pairs are disulfide-bonded: C54-C81 and C75-C324. N98 carries N-linked (GlcNAc...) asparagine glycosylation. Residues S336 and N338 each coordinate Mg(2+). Residues C370 and C519 are joined by a disulfide bond. Residues N415 and N504 are each glycosylated (N-linked (Hex...) asparagine). The an N-all-trans-retinylidenephosphatidylethanolamine site is built by R587 and R653. Cystine bridges form between C641–C1488, C1442–C1453, and C1486–C1500. Residues 647–667 form a helical membrane-spanning segment; that stretch reads FMIILNRCFPIFMVLAWIYSV. At 668–699 the chain is on the cytoplasmic side; sequence SMTVKSIVLEKELRLKETLKNQGVSNRVIWCT. Residues 700–720 form a helical membrane-spanning segment; sequence WFLDSFSIMSMSICLLTIFIM. Topologically, residues 721–730 are extracellular; that stretch reads HGRILHYSNP. The chain crosses the membrane as a helical span at residues 731 to 751; sequence FILFLFLLAFSIATIMQCFLL. Topologically, residues 752–759 are cytoplasmic; the sequence is STFFSRAS. A helical transmembrane segment spans residues 760–780; sequence LAAACSGVIYFTLYLPHILCF. Residues 781–835 lie on the Extracellular side of the membrane; the sequence is AWQDRITADMKMAVSLLSPVAFGFGTEYLARFEEQGVGLQWSNIGNSPMEGDEFS. The helical transmembrane segment at 836-856 threads the bilayer; it reads FLMSMKMMLLDAALYGLLAWY. The Cytoplasmic portion of the chain corresponds to 857-1374; it reads LDQVFPGDYG…IRSHKDFLAQ (518 aa). T901 bears the Phosphothreonine mark. In terms of domain architecture, ABC transporter 1 spans 929-1160; sequence VCVKNLVKIF…FGTGFYLTLV (232 aa). F938, G966, and K969 together coordinate ATP. Mg(2+) is bound at residue T970. ATP is bound by residues T971, Q1010, K1054, G1064, G1065, and H1118. S1185 is subject to Phosphoserine. The interval 1295–1340 is disordered; that stretch reads ENINLRHPCSGPSEKAGQTPQGSSSHPREPAAHPEGQPPPEREGHS. A compositionally biased stretch (polar residues) spans 1310–1319; sequence AGQTPQGSSS. T1313 is subject to Phosphothreonine. S1317 and S1319 each carry phosphoserine. Residues 1375-1395 traverse the membrane as a helical segment; it reads IVLPATFVFLALMLSLIIPPF. Residues 1396–1679 are Extracellular-facing; that stretch reads GEYPALTLHP…TVLTTSVDAV (284 aa). N-linked (Hex...) asparagine glycosylation is present at N1455. An N-linked (Hex...) asparagine glycan is attached at N1527. N1586 is a glycosylation site (N-linked (GlcNAc...) asparagine). The N-linked (Hex...) asparagine glycan is linked to N1660. A helical transmembrane segment spans residues 1680–1700; that stretch reads VAICVIFAMSFVPASFVLYLI. Residues 1701-1725 are Cytoplasmic-facing; the sequence is QERVNKAKHLQFVSGVSPTTYWLTN. A helical transmembrane segment spans residues 1726–1746; sequence FLWDIMNYTVSAALVVGIFIG. At 1747-1757 the chain is on the extracellular side; that stretch reads FQKKAYTSSEN. A helical membrane pass occupies residues 1758-1778; the sequence is LPALVALLMLYGWAVIPMMYP. Residues 1779 to 1790 are Cytoplasmic-facing; it reads ASFLFDIPSTAY. A helical transmembrane segment spans residues 1791–1811; sequence VALSCANLFIGINSSAITFVL. The Extracellular portion of the chain corresponds to 1812-1829; it reads ELFENNRTLLRINAMLRK. N-linked (GlcNAc...) asparagine glycosylation occurs at N1817. The helical transmembrane segment at 1830 to 1850 threads the bilayer; the sequence is LLIIFPHFCLGRGLIDLALSQ. The Cytoplasmic segment spans residues 1851-1879; the sequence is AVTDVYARFGEEHSSNPFQWDLIGKNLAA. The helical transmembrane segment at 1880 to 1900 threads the bilayer; sequence MAVEGVVYFLLTLLIQYQFFF. At 1901–2281 the chain is on the extracellular side; sequence SRWTTEPAKE…VDKGNSAPQG (381 aa). A glycan (N-linked (GlcNAc...) asparagine) is linked at N1931. Positions 1936 to 2168 constitute an ABC transporter 2 domain; sequence LRLNELTKVY…FGDGYIVTMK (233 aa). 5 residues coordinate ATP: N1972, G1973, K1976, T1977, and T1978. T1977 provides a ligand contact to Mg(2+). 2 N-linked (GlcNAc...) asparagine glycosylation sites follow: N2004 and N2050. G2071 serves as a coordination point for ATP. Positions 2242–2247 are essential for ATP binding and ATPase activity; it reads VFVNFA. N-linked (GlcNAc...) asparagine glycosylation is present at N2251. The tract at residues 2262–2281 is disordered; sequence AAGASRQAKEVDKGNSAPQG.

N-glycosylated. Post-translationally, proteolytic cleavage by trypsin leads to a 120-kDa N-terminal fragment and a 115-kDa C-terminal fragment that are linked through disulfide bonds. In terms of processing, phosphorylation is independent of light exposure and modulates ATPase activity. In terms of tissue distribution, expressed in retina namely in the periphery and incisures of the rod outer segments (ROS).

The protein resides in the membrane. It localises to the cell projection. It is found in the cilium. The protein localises to the photoreceptor outer segment. Its subcellular location is the cytoplasmic vesicle. The protein resides in the endoplasmic reticulum. The enzyme catalyses ATP + H2O + phospholipidSide 1 = ADP + phosphate + phospholipidSide 2.. It catalyses the reaction an N-all-trans-retinylidenephosphatidylethanolamine(out) + ATP + H2O = an N-all-trans-retinylidenephosphatidylethanolamine(in) + ADP + phosphate + H(+). The catalysed reaction is a 1,2-diacyl-sn-glycero-3-phosphoethanolamine(out) + ATP + H2O = a 1,2-diacyl-sn-glycero-3-phosphoethanolamine(in) + ADP + phosphate + H(+). It carries out the reaction N-11-cis-retinylidenephosphatidylethanolamine(out) + ATP + H2O = N-11-cis-retinylidenephosphatidylethanolamine(in) + ADP + phosphate + H(+). The enzyme catalyses ATP + H2O = ADP + phosphate + H(+). With respect to regulation, all-trans-retinal transport activity is reduced by EDTA chelation of Mg2+. All-trans-retinal transport activity is inhibited by N-ethylmaleimide (NEM). Phosphatidylethanolamine transport is strongly inhibited by beryllium fluoride and NEM. Its function is as follows. Flippase that catalyzes in an ATP-dependent manner the transport of retinal-phosphatidylethanolamine conjugates like the 11-cis and all-trans isomers of N-retinylidene-phosphatidylethanolamine from the lumen to the cytoplasmic leaflet of photoreceptor outer segment disk membranes, where N-cis-retinylidene-phosphatidylethanolamine (N-cis-R-PE) is then isomerized to its all-trans isomer (N-trans-R-PE) and reduced by RDH8 to produce all-trans-retinol (all-trans-rol) and therefore prevents the accumulation of excess of 11-cis-retinal and its schiff-base conjugate and the formation of toxic bisretinoid. Displays both ATPase and GTPase activity that is strongly influenced by the lipid environment and the presence of retinoid compounds. Binds the unprotonated form of N-retinylidene-phosphatidylethanolamine with high affinity in the absence of ATP and ATP binding and hydrolysis induce a protein conformational change that causes the dissociation of N-retinylidene-phosphatidylethanolamine. The sequence is that of Retinal-specific phospholipid-transporting ATPase ABCA4 from Bos taurus (Bovine).